The following is a 326-amino-acid chain: Acetyl-coenzyme A carboxylase carboxyl transferase subunit alpha (326 aa).

Positions Lys44–Glu298 constitute a CoA carboxyltransferase C-terminal domain.

The protein belongs to the AccA family. In terms of assembly, acetyl-CoA carboxylase is a heterohexamer composed of biotin carboxyl carrier protein (AccB), biotin carboxylase (AccC) and two subunits each of ACCase subunit alpha (AccA) and ACCase subunit beta (AccD).

It is found in the cytoplasm. The catalysed reaction is N(6)-carboxybiotinyl-L-lysyl-[protein] + acetyl-CoA = N(6)-biotinyl-L-lysyl-[protein] + malonyl-CoA. Its pathway is lipid metabolism; malonyl-CoA biosynthesis; malonyl-CoA from acetyl-CoA: step 1/1. Functionally, component of the acetyl coenzyme A carboxylase (ACC) complex. First, biotin carboxylase catalyzes the carboxylation of biotin on its carrier protein (BCCP) and then the CO(2) group is transferred by the carboxyltransferase to acetyl-CoA to form malonyl-CoA. The polypeptide is Acetyl-coenzyme A carboxylase carboxyl transferase subunit alpha (Nostoc sp. (strain PCC 7120 / SAG 25.82 / UTEX 2576)).